Here is a 332-residue protein sequence, read N- to C-terminus: D-galactose/methyl-galactoside binding periplasmic protein MglB (332 aa).

Residues 1-23 form the signal peptide; that stretch reads MNKKVLTLSAVMASMLFGAAAHA. Residues Asp-37 and Asn-114 each contribute to the beta-D-galactose site. Beta-D-glucose is bound by residues Asp-37 and Asn-114. Asp-157, Asn-159, Asp-161, Gln-163, and Gln-165 together coordinate Ca(2+). Beta-D-galactose is bound by residues His-175, Asp-177, and Arg-181. Beta-D-glucose contacts are provided by His-175, Asp-177, and Arg-181. Glu-228 contributes to the Ca(2+) binding site. Residues Asn-234, Asp-259, and Asn-279 each contribute to the beta-D-galactose site. Residues Asn-234, Asp-259, and Asn-279 each coordinate beta-D-glucose.

The protein belongs to the bacterial solute-binding protein 2 family. As to quaternary structure, the ABC transporter complex is composed of one ATP-binding protein (MglA), two transmembrane proteins (MglC) and a solute-binding protein (MglB).

Its subcellular location is the periplasm. Its function is as follows. Part of the ABC transporter complex MglABC involved in galactose/methyl galactoside import. In addition, binds D-galactose and D-glucose and plays a role in the chemotaxis towards these two sugars by interacting with the Trg chemoreceptor. The chain is D-galactose/methyl-galactoside binding periplasmic protein MglB (mglB) from Escherichia coli O6:H1 (strain CFT073 / ATCC 700928 / UPEC).